The sequence spans 300 residues: Zinc finger protein 705B (300 aa).

Residues 7-78 (VTFEDVAIDF…GRVFLQDQNP (72 aa)) enclose the KRAB domain. C2H2-type zinc fingers lie at residues 172–194 (YQCNLCEKAYTNCFYLRRHKMTH), 200–222 (YACHLCGKAFTQCSHLRRHEKTH), and 228–250 (YKCHQCGKAFIQSFNLRRHERTH). The C2H2-type 4; degenerate zinc finger occupies 256–278 (YECDKSGKAFSQSSGFRGNKIIH).

This sequence belongs to the krueppel C2H2-type zinc-finger protein family.

The protein resides in the nucleus. Its function is as follows. May be involved in transcriptional regulation. The sequence is that of Zinc finger protein 705B (ZNF705B) from Homo sapiens (Human).